Reading from the N-terminus, the 143-residue chain is Large ribosomal subunit protein uL13 (143 aa).

Belongs to the universal ribosomal protein uL13 family. In terms of assembly, part of the 50S ribosomal subunit.

This protein is one of the early assembly proteins of the 50S ribosomal subunit, although it is not seen to bind rRNA by itself. It is important during the early stages of 50S assembly. The polypeptide is Large ribosomal subunit protein uL13 (Neisseria meningitidis serogroup C (strain 053442)).